The following is a 473-amino-acid chain: Trigger factor (473 aa).

Positions 171-256 (GDRVTIDFVG…VTKIQAAGEA (86 aa)) constitute a PPIase FKBP-type domain. The segment at 439-473 (KEALFADEDGDDTTGGKPADKAEAKDESKTEAKAD) is disordered. Residues 456-473 (PADKAEAKDESKTEAKAD) show a composition bias toward basic and acidic residues.

It belongs to the FKBP-type PPIase family. Tig subfamily.

The protein resides in the cytoplasm. The enzyme catalyses [protein]-peptidylproline (omega=180) = [protein]-peptidylproline (omega=0). Involved in protein export. Acts as a chaperone by maintaining the newly synthesized protein in an open conformation. Functions as a peptidyl-prolyl cis-trans isomerase. The chain is Trigger factor from Methylobacterium radiotolerans (strain ATCC 27329 / DSM 1819 / JCM 2831 / NBRC 15690 / NCIMB 10815 / 0-1).